Consider the following 897-residue polypeptide: Patched domain-containing protein 1 (897 aa).

The helical transmembrane segment at 25 to 45 threads the bilayer; sequence PVFFLTVPAVLTIIFGSTVLS. N-linked (GlcNAc...) asparagine glycosylation is found at N132, N167, and N179. 2 helical membrane-spanning segments follow: residues 271-291 and 306-326; these read GVLA…AATI and GLLG…IFFI. Residues 273 to 433 enclose the SSD domain; it reads LAKSEVLVSL…FSFYGSCLVF (161 aa). N332 carries N-linked (GlcNAc...) asparagine glycosylation. 4 helical membrane-spanning segments follow: residues 335-355, 377-397, 414-434, and 506-526; these read LLGI…ELLA, VMVC…MGAS, VAVL…LVFA, and PFVV…CLQI. N-linked (GlcNAc...) asparagine glycans are attached at residues N572 and N603. The next 3 membrane-spanning stretches (helical) occupy residues 701–721, 727–747, and 754–774; these read PILT…FLVI, FWLI…MTLW, and ISIL…APHL. N803 carries N-linked (GlcNAc...) asparagine glycosylation. The next 2 membrane-spanning stretches (helical) occupy residues 806–826 and 831–851; these read CFVI…YTLF and LTAG…LTFF. Residues 856-866 show a composition bias toward basic residues; that stretch reads KRHKKKKRAKR. Residues 856-881 are disordered; sequence KRHKKKKRAKRKEREREREREREREE. Residues 867–881 show a composition bias toward basic and acidic residues; that stretch reads KEREREREREREREE.

Belongs to the patched family.

The protein localises to the cell membrane. Its subcellular location is the cell projection. It is found in the dendritic spine. Functionally, can bind cholesterol in vitro. This Danio rerio (Zebrafish) protein is Patched domain-containing protein 1 (ptchd1).